The sequence spans 152 residues: Anaerobic nitrite reductase SYMA (152 aa).

Residues 2-151 (ALTERQEALL…LVATIKAEMK (150 aa)) form the Globin domain. The Homodimerization motif lies at 35 to 39 (EAAPE). Residues S45, K59, H63, R93, and H98 each contribute to the heme b site. The short motif at 105–117 (DPHFEVMKGALLG) is the Homodimerization element.

Belongs to the plant globin family. As to quaternary structure, homodimer. It depends on heme b as a cofactor. Root nodules.

It localises to the cytoplasm. The protein localises to the nucleus. It catalyses the reaction Fe(III)-heme b-[protein] + nitric oxide + H2O = Fe(II)-heme b-[protein] + nitrite + 2 H(+). Functionally, phytoglobin that reduces nitrite to nitric oxide (NO) under anoxic conditions (e.g. during flooding or in waterlogged soil) and upon root nodulation. Required for general plant development and during nodulation, especially for the onset of symbiosis. Monitors nitric oxide (NO) levels during early phase of the nitrogen-fixing symbiosis and buffers oxygen in functioning nodules. May not function as an oxygen storage or transport protein. Has an unusually high affinity for O(2) through a hexacoordinate heme iron because of a very low dissociation constant. In Casuarina glauca (Swamp oak), this protein is Anaerobic nitrite reductase SYMA.